The chain runs to 147 residues: Proteinase inhibitor type-2 (147 aa).

An N-terminal signal peptide occupies residues 1-25 (MAVHKEVSFVAYLLIVLGMFLYVDA). 2 consecutive repeat copies span residues 25-81 (ALGC…DPKN) and 82-141 (PKAC…DEPK). 8 cysteine pairs are disulfide-bonded: C28–C116, C32–C112, C40–C122, C52–C89, C55–C73, C56–C85, C62–C98, and C115–C133.

It belongs to the protease inhibitor I20 (potato type II proteinase inhibitor) family.

This Solanum tuberosum (Potato) protein is Proteinase inhibitor type-2.